We begin with the raw amino-acid sequence, 346 residues long: Probable galacturonosyltransferase-like 6 (346 aa).

A helical; Signal-anchor for type II membrane protein membrane pass occupies residues 1 to 21 (MLWITRFAGLFSAAMAVIVLS). Over 22–346 (PSLQSFPPAA…TPYDLYRHSH (325 aa)) the chain is Lumenal. The N-linked (GlcNAc...) asparagine glycan is linked to Asn-203.

This sequence belongs to the glycosyltransferase 8 family.

Its subcellular location is the golgi apparatus membrane. It participates in glycan metabolism; pectin biosynthesis. Functionally, may be involved in pectin and/or xylans biosynthesis in cell walls. In Arabidopsis thaliana (Mouse-ear cress), this protein is Probable galacturonosyltransferase-like 6 (GATL6).